Consider the following 432-residue polypeptide: Serine hydroxymethyltransferase (432 aa).

Residues Leu-117 and 121–123 each bind (6S)-5,6,7,8-tetrahydrofolate; that span reads GHL. Position 226 is an N6-(pyridoxal phosphate)lysine (Lys-226). Residue 366-368 participates in (6S)-5,6,7,8-tetrahydrofolate binding; it reads SPF.

It belongs to the SHMT family. As to quaternary structure, homodimer. Pyridoxal 5'-phosphate is required as a cofactor.

Its subcellular location is the cytoplasm. It catalyses the reaction (6R)-5,10-methylene-5,6,7,8-tetrahydrofolate + glycine + H2O = (6S)-5,6,7,8-tetrahydrofolate + L-serine. Its pathway is one-carbon metabolism; tetrahydrofolate interconversion. It functions in the pathway amino-acid biosynthesis; glycine biosynthesis; glycine from L-serine: step 1/1. In terms of biological role, catalyzes the reversible interconversion of serine and glycine with tetrahydrofolate (THF) serving as the one-carbon carrier. This reaction serves as the major source of one-carbon groups required for the biosynthesis of purines, thymidylate, methionine, and other important biomolecules. Also exhibits THF-independent aldolase activity toward beta-hydroxyamino acids, producing glycine and aldehydes, via a retro-aldol mechanism. The polypeptide is Serine hydroxymethyltransferase (Salinibacter ruber (strain DSM 13855 / M31)).